The chain runs to 474 residues: Trehalose-6-phosphate synthase (474 aa).

Arginine 10 serves as a coordination point for D-glucose 6-phosphate. UDP-alpha-D-glucose is bound at residue 22 to 23 (GG). The D-glucose 6-phosphate site is built by tyrosine 77 and aspartate 131. The UDP-alpha-D-glucose site is built by arginine 263 and lysine 268. A D-glucose 6-phosphate-binding site is contributed by arginine 301. Residues phenylalanine 340 and 366 to 370 (LVAKE) each bind UDP-alpha-D-glucose.

The protein belongs to the glycosyltransferase 20 family. Homotetramer.

The catalysed reaction is D-glucose 6-phosphate + UDP-alpha-D-glucose = alpha,alpha-trehalose 6-phosphate + UDP + H(+). It participates in glycan biosynthesis; trehalose biosynthesis. Probably involved in the osmoprotection via the biosynthesis of trehalose. Catalyzes the transfer of glucose from UDP-alpha-D-glucose (UDP-Glc) to D-glucose 6-phosphate (Glc-6-P) to form trehalose-6-phosphate. Acts with retention of the anomeric configuration of the UDP-sugar donor. In Escherichia coli O9:H4 (strain HS), this protein is Trehalose-6-phosphate synthase.